Consider the following 258-residue polypeptide: Glucose 1-dehydrogenase 2 (258 aa).

Position 11–35 (11–35 (IVTGSSKGIGKAIAERFGKEKMNVV)) interacts with NADP(+). A substrate-binding site is contributed by Ser146. The Proton acceptor role is filled by Tyr159.

It belongs to the short-chain dehydrogenases/reductases (SDR) family. As to quaternary structure, homotetramer.

The enzyme catalyses D-glucose + NAD(+) = D-glucono-1,5-lactone + NADH + H(+). It carries out the reaction D-glucose + NADP(+) = D-glucono-1,5-lactone + NADPH + H(+). The polypeptide is Glucose 1-dehydrogenase 2 (ycdF) (Bacillus subtilis (strain 168)).